The chain runs to 357 residues: 3-isopropylmalate dehydrogenase (357 aa).

The substrate site is built by Arg97, Arg107, Arg135, and Asp224. Mg(2+) contacts are provided by Asp224, Asp248, and Asp252. Gly282–Asn294 lines the NAD(+) pocket.

It belongs to the isocitrate and isopropylmalate dehydrogenases family. LeuB type 1 subfamily. In terms of assembly, homodimer. The cofactor is Mg(2+). Mn(2+) serves as cofactor.

Its subcellular location is the cytoplasm. It catalyses the reaction (2R,3S)-3-isopropylmalate + NAD(+) = 4-methyl-2-oxopentanoate + CO2 + NADH. It functions in the pathway amino-acid biosynthesis; L-leucine biosynthesis; L-leucine from 3-methyl-2-oxobutanoate: step 3/4. Catalyzes the oxidation of 3-carboxy-2-hydroxy-4-methylpentanoate (3-isopropylmalate) to 3-carboxy-4-methyl-2-oxopentanoate. The product decarboxylates to 4-methyl-2 oxopentanoate. The chain is 3-isopropylmalate dehydrogenase from Synechococcus sp. (strain CC9902).